The sequence spans 177 residues: Alpha-crystallin B chain (177 aa).

N-acetylmethionine is present on Met1. One can recognise a sHSP domain in the interval 58–166 (RMPSWAQTGL…PERSVPISRD (109 aa)). Positions 85, 106, 108, 113, and 121 each coordinate Zn(2+). Residues 155-169 (DVPERSVPISRDEKP) show a composition bias toward basic and acidic residues. A disordered region spans residues 155–177 (DVPERSVPISRDEKPAVAGPQQK).

It belongs to the small heat shock protein (HSP20) family. Heteromer composed of three CRYAA and one CRYAB subunits. Aggregates with homologous proteins, including the small heat shock protein HSPB1, to form large heteromeric complexes. Inter-subunit bridging via zinc ions enhances stability, which is crucial as there is no protein turn over in the lens. Interacts with HSPBAP1 and TTN/titin.

Its function is as follows. May contribute to the transparency and refractive index of the lens. This chain is Alpha-crystallin B chain (CRYAB), found in Squalus acanthias (Spiny dogfish).